The following is a 789-amino-acid chain: GDH/6PGL endoplasmic bifunctional protein (789 aa).

The first 16 residues, 1–16 (MLLAAMCLALLGCLQA), serve as a signal peptide directing secretion. The residue at position 17 (Q17) is a Pyrrolidone carboxylic acid. The tract at residues 17–524 (QELKGHVSII…GGQLTFSQQQ (508 aa)) is hexose-6-phosphate dehydrogenase. NADP(+) is bound by residues 29–36 (GATGDLAK) and Y146. An N-linked (GlcNAc...) asparagine glycan is attached at N154. An NADP(+)-binding site is contributed by K171. D-glucose 6-phosphate contacts are provided by residues K171, 201–205 (HYLGK), E240, and D259. K205 carries the N6-succinyllysine modification. The active-site Proton acceptor is H264. N279 is a glycosylation site (N-linked (GlcNAc...) asparagine). D-glucose 6-phosphate-binding residues include K357 and R362. R367 contacts NADP(+). N6-succinyllysine is present on K424. The linker stretch occupies residues 525-538 (LEVLIPDLGSVPKP). The interval 539–789 (SDFQVLGARY…WYMDYEAFLG (251 aa)) is 6-phosphogluconolactonase. NADP(+) is bound at residue W615. N681 carries N-linked (GlcNAc...) asparagine glycosylation.

It in the N-terminal section; belongs to the glucose-6-phosphate dehydrogenase family. This sequence in the C-terminal section; belongs to the glucosamine/galactosamine-6-phosphate isomerase family. 6-phosphogluconolactonase subfamily. Homodimer. Expressed in liver (at protein level). Expressed in muscles. Expressed in adipose tissues.

The protein localises to the endoplasmic reticulum lumen. The catalysed reaction is D-glucose 6-phosphate + NAD(+) = 6-phospho-D-glucono-1,5-lactone + NADH + H(+). It carries out the reaction D-glucose 6-phosphate + NADP(+) = 6-phospho-D-glucono-1,5-lactone + NADPH + H(+). The enzyme catalyses 6-phospho-D-glucono-1,5-lactone + H2O = 6-phospho-D-gluconate + H(+). It catalyses the reaction 2-deoxy-D-glucose 6-phosphate + NAD(+) = 2-deoxy-6-phospho-D-glucono-1,5-lactone + NADH + H(+). The catalysed reaction is 2-deoxy-D-glucose 6-phosphate + NADP(+) = 2-deoxy-6-phospho-D-glucono-1,5-lactone + NADPH + H(+). It carries out the reaction D-galactose 6-phosphate + NADP(+) = 6-phospho-D-galactono-1,5-lactone + NADPH + H(+). The enzyme catalyses D-galactose 6-phosphate + NAD(+) = 6-phospho-D-galactono-1,5-lactone + NADH + H(+). It catalyses the reaction D-glucosamine 6-phosphate + NADP(+) = 2-amino-2-deoxy-6-phospho-D-glucono-1,5-lactone + NADPH + 2 H(+). The catalysed reaction is D-glucose + NAD(+) = D-glucono-1,5-lactone + NADH + H(+). It carries out the reaction D-glucose + NADP(+) = D-glucono-1,5-lactone + NADPH + H(+). The enzyme catalyses D-glucose 6-sulfate + NADP(+) = 6-sulfo-D-glucono-1,5-lactone + NADPH + H(+). It participates in carbohydrate degradation; pentose phosphate pathway; D-ribulose 5-phosphate from D-glucose 6-phosphate (oxidative stage). It functions in the pathway carbohydrate degradation; pentose phosphate pathway; D-ribulose 5-phosphate from D-glucose 6-phosphate (oxidative stage): step 2/3. Functionally, bifunctional enzyme localized in the lumen of the endoplasmic reticulum that catalyzes the first two steps of the oxidative branch of the pentose phosphate pathway/shunt, an alternative to glycolysis and a major source of reducing power and metabolic intermediates for biosynthetic processes. Has a hexose-6-phosphate dehydrogenase activity, with broad substrate specificity compared to glucose-6-phosphate 1-dehydrogenase/G6PD, and catalyzes the first step of the pentose phosphate pathway. In addition, acts as a 6-phosphogluconolactonase and catalyzes the second step of the pentose phosphate pathway. May have a dehydrogenase activity for alternative substrates including glucosamine 6-phosphate and glucose 6-sulfate. The main function of this enzyme is to provide reducing equivalents such as NADPH to maintain the adequate levels of reductive cofactors in the oxidizing environment of the endoplasmic reticulum. By producing NADPH that is needed by reductases of the lumen of the endoplasmic reticulum like corticosteroid 11-beta-dehydrogenase isozyme 1/HSD11B1, indirectly regulates their activity. This is GDH/6PGL endoplasmic bifunctional protein from Mus musculus (Mouse).